Reading from the N-terminus, the 638-residue chain is 3D-(3,5/4)-trihydroxycyclohexane-1,2-dione hydrolase (638 aa).

Glu-67 provides a ligand contact to thiamine diphosphate. The interval 442–523 (SLPGDLQRLW…INIMLFDNSG (82 aa)) is thiamine pyrophosphate binding. Residues Asp-494 and Asn-521 each contribute to the Mg(2+) site.

It belongs to the TPP enzyme family. Mg(2+) is required as a cofactor. Requires thiamine diphosphate as cofactor.

It catalyses the reaction 3D-3,5/4-trihydroxycyclohexane-1,2-dione + H2O = 5-deoxy-D-glucuronate + H(+). Its pathway is polyol metabolism; myo-inositol degradation into acetyl-CoA; acetyl-CoA from myo-inositol: step 3/7. Its function is as follows. Involved in the cleavage of the C1-C2 bond of 3D-(3,5/4)-trihydroxycyclohexane-1,2-dione (THcHDO) to yield 5-deoxy-glucuronate (5DG). The sequence is that of 3D-(3,5/4)-trihydroxycyclohexane-1,2-dione hydrolase from Listeria monocytogenes serovar 1/2a (strain ATCC BAA-679 / EGD-e).